The sequence spans 185 residues: Large ribosomal subunit protein bL25 (185 aa).

It belongs to the bacterial ribosomal protein bL25 family. CTC subfamily. In terms of assembly, part of the 50S ribosomal subunit; part of the 5S rRNA/L5/L18/L25 subcomplex. Contacts the 5S rRNA. Binds to the 5S rRNA independently of L5 and L18.

This is one of the proteins that binds to the 5S RNA in the ribosome where it forms part of the central protuberance. In Chlamydia muridarum (strain MoPn / Nigg), this protein is Large ribosomal subunit protein bL25.